The sequence spans 320 residues: NAC domain-containing protein 20 (320 aa).

Residues 14–170 (LPPGFRFHPT…DWAVCRIFHK (157 aa)) enclose the NAC domain. A DNA-binding region spans residues 114–176 (IGMKKTLVFY…IFHKSSGIKK (63 aa)).

In terms of assembly, forms homodimers. Forms heterodimers with NAC26. As to expression, expressed in developing seeds.

It is found in the nucleus. Its subcellular location is the endoplasmic reticulum. In terms of biological role, transcription factor that acts redundantly with NAC26 to regulate the expression of genes involved in the biosynthesis of starch and storage proteins in grain. Directly binds to the promoters of starch synthase 1 (SS1), pullulanase (PUL), glutelin A1 (GLUA1), glutelins B4 and B5 (GLUB4 and GLUB5), alpha-globulin and 16 kDa prolamin, and activates their expression. Possesses transactivation activity in yeast. This chain is NAC domain-containing protein 20, found in Oryza sativa subsp. indica (Rice).